The primary structure comprises 137 residues: MTKSELVEKLAARFPQLLLRDADISVKTILDAMSDALADGHRIEIRGFGSFGLNRRPPRVGRNPKSGERVLVPEKRVPHFKAGKELRERVDRNLTPSSGGSGNGHLTGTPSGKGPQGAAPGSPAVLHEGGGLNLARS.

Positions 75-92 are enriched in basic and acidic residues; the sequence is KRVPHFKAGKELRERVDR. The interval 75-137 is disordered; that stretch reads KRVPHFKAGK…EGGGLNLARS (63 aa). The segment covering 128–137 has biased composition (gly residues); the sequence is EGGGLNLARS.

It belongs to the bacterial histone-like protein family. As to quaternary structure, heterodimer of an alpha and a beta chain.

Its function is as follows. This protein is one of the two subunits of integration host factor, a specific DNA-binding protein that functions in genetic recombination as well as in transcriptional and translational control. The protein is Integration host factor subunit beta of Cupriavidus pinatubonensis (strain JMP 134 / LMG 1197) (Cupriavidus necator (strain JMP 134)).